The following is a 399-amino-acid chain: Probable WRKY transcription factor 48 (399 aa).

2 stretches are compositionally biased toward basic and acidic residues: residues 1–11 and 19–38; these read MEKKKEEDHHH and KEIK…EQKQ. 2 disordered regions span residues 1–57 and 138–202; these read MEKK…TSSD and AESS…KNQK. A compositionally biased stretch (low complexity) spans 143–161; that stretch reads VVNTTPTSPNSTSVSSSSN. Residues 162-171 are compositionally biased toward polar residues; it reads EAANDNNSGK. The span at 184–193 shows a compositional bias: low complexity; sequence QQEQKGTKPQ. Positions 215–280 form a DNA-binding region, WRKY; that stretch reads SDIDNLDDGY…YEGQHTHPFP (66 aa). A disordered region spans residues 361-399; the sequence is QASTSTSSSIRDHGLLQDILPSQIRSDTINTQTNEENKK. Positions 383-399 are enriched in polar residues; it reads QIRSDTINTQTNEENKK.

The protein resides in the nucleus. Functionally, transcription factor. Interacts specifically with the W box (5'-(T)TGAC[CT]-3'), a frequently occurring elicitor-responsive cis-acting element. The polypeptide is Probable WRKY transcription factor 48 (WRKY48) (Arabidopsis thaliana (Mouse-ear cress)).